The following is a 521-amino-acid chain: Cholesterol side-chain cleavage enzyme, mitochondrial (521 aa).

Residues 1-39 (MLAKGLPPRSVLVKGCQTFLSAPREGLGRLRVPTGEGAG) constitute a mitochondrion transit peptide. Position 462 (Cys462) interacts with heme.

It belongs to the cytochrome P450 family. In terms of assembly, interacts with FDX1/adrenodoxin. Heme is required as a cofactor.

The protein localises to the mitochondrion inner membrane. It catalyses the reaction 6 reduced [adrenodoxin] + cholesterol + 3 O2 + 6 H(+) = 4-methylpentanal + pregnenolone + 6 oxidized [adrenodoxin] + 4 H2O. It carries out the reaction 2 reduced [adrenodoxin] + cholesterol + O2 + 2 H(+) = (22R)-hydroxycholesterol + 2 oxidized [adrenodoxin] + H2O. The enzyme catalyses (22R)-hydroxycholesterol + 2 reduced [adrenodoxin] + O2 + 2 H(+) = (20R,22R)-20,22-dihydroxycholesterol + 2 oxidized [adrenodoxin] + H2O. The catalysed reaction is (20R,22R)-20,22-dihydroxycholesterol + 2 reduced [adrenodoxin] + O2 + 2 H(+) = 4-methylpentanal + pregnenolone + 2 oxidized [adrenodoxin] + 2 H2O. The protein operates within lipid metabolism; C21-steroid hormone metabolism. It participates in steroid metabolism; cholesterol metabolism. Its function is as follows. A cytochrome P450 monooxygenase that catalyzes the side-chain hydroxylation and cleavage of cholesterol to pregnenolone, the precursor of most steroid hormones. Catalyzes three sequential oxidation reactions of cholesterol, namely the hydroxylation at C22 followed with the hydroxylation at C20 to yield 20R,22R-hydroxycholesterol that is further cleaved between C20 and C22 to yield the C21-steroid pregnenolone and 4-methylpentanal. Mechanistically, uses molecular oxygen inserting one oxygen atom into a substrate and reducing the second into a water molecule. Two electrons are provided by NADPH via a two-protein mitochondrial transfer system comprising flavoprotein FDXR (adrenodoxin/ferredoxin reductase) and nonheme iron-sulfur protein FDX1 or FDX2 (adrenodoxin/ferredoxin). The protein is Cholesterol side-chain cleavage enzyme, mitochondrial of Homo sapiens (Human).